A 297-amino-acid chain; its full sequence is Myoblast determination protein 1 homolog (297 aa).

The interval 52 to 76 is disordered; the sequence is KPEEHPHHHGHHHGHPHEEEHVRAP. A bHLH domain is found at 101 to 152; sequence DRRKAATMRERRRLSKVNEAFETLKRCTSTNPNQRLPKVEILRNAIRYIESL. Disordered stretches follow at residues 171-221 and 243-297; these read SGES…GKSS and CPIL…YQVL. Polar residues-rich tracts occupy residues 174–184 and 258–297; these read SDASSPRSNCS and CSPQ…YQVL.

As to quaternary structure, efficient DNA binding requires dimerization with another bHLH protein. Seems to form active heterodimers with ITF-2.

It localises to the nucleus. Acts as a transcriptional activator that promotes transcription of muscle-specific target genes and plays a role in muscle differentiation. Induces fibroblasts to differentiate into myoblasts. Interacts with and is inhibited by the twist protein. This interaction probably involves the basic domains of both proteins. The chain is Myoblast determination protein 1 homolog (MYOD1) from Coturnix japonica (Japanese quail).